A 531-amino-acid polypeptide reads, in one-letter code: Peptide chain release factor 3 (531 aa).

The tr-type G domain occupies 10–278 (RRRRTFAIIS…SLIDWAPAPK (269 aa)). Residues 19–26 (SHPDAGKT), 87–91 (DTPGH), and 141–144 (NKYD) each bind GTP.

It belongs to the TRAFAC class translation factor GTPase superfamily. Classic translation factor GTPase family. PrfC subfamily.

It localises to the cytoplasm. Increases the formation of ribosomal termination complexes and stimulates activities of RF-1 and RF-2. It binds guanine nucleotides and has strong preference for UGA stop codons. It may interact directly with the ribosome. The stimulation of RF-1 and RF-2 is significantly reduced by GTP and GDP, but not by GMP. This Neisseria gonorrhoeae (strain ATCC 700825 / FA 1090) protein is Peptide chain release factor 3.